Reading from the N-terminus, the 463-residue chain is 23S rRNA (uracil(1939)-C(5))-methyltransferase RlmD (463 aa).

A TRAM domain is found at Ala-14–Glu-78. [4Fe-4S] cluster is bound by residues Cys-91, Cys-97, Cys-100, and Cys-179. Gln-287, Phe-316, Asn-321, Glu-337, Asn-365, and Asp-386 together coordinate S-adenosyl-L-methionine. The Nucleophile role is filled by Cys-419.

The protein belongs to the class I-like SAM-binding methyltransferase superfamily. RNA M5U methyltransferase family. RlmD subfamily.

The catalysed reaction is uridine(1939) in 23S rRNA + S-adenosyl-L-methionine = 5-methyluridine(1939) in 23S rRNA + S-adenosyl-L-homocysteine + H(+). In terms of biological role, catalyzes the formation of 5-methyl-uridine at position 1939 (m5U1939) in 23S rRNA. This chain is 23S rRNA (uracil(1939)-C(5))-methyltransferase RlmD, found in Cupriavidus pinatubonensis (strain JMP 134 / LMG 1197) (Cupriavidus necator (strain JMP 134)).